Consider the following 400-residue polypeptide: MTFQTLDDLDDGQRVLVRLDLNSPVEDGTVQDNRRFDRHAETVSELVDRGFEVAVLAHQGRPGRDDFVSLAQHAEILADHIDHDVDFVDETYGPQAIHDIADLDGGDVLVLENTRMCDDELPEEDPEVKSQTEFVQTLKDEFDAYINDAYSAAHRSHASLVGFPLVMDAYAGRVMETEYEANTAIAEKEFDGQVTMVVGGTKATDVIDVMTHLDEKVDDFLLGGIAGELFLRAAGYPVGYDIDDANLYDEQWEENSEKIESMLEDHRDQITLAVDLAYEDDGDRAEQAVDDIEEKSVSYLDVGSETVMEYSPVIRDSEAVFVKGALGMFEDERFSVGTAGVLEAIADTDCFSVVGGGDTSRAIEMYGMEEDEFGHVSIAGGAYIRALTGAELVGVEVLQR.

Substrate contacts are provided by residues 20 to 22 (DLN), Arg-35, 58 to 61 (HQGR), Arg-115, and Arg-155. ATP contacts are provided by residues Glu-330 and 356-359 (GGDT).

The protein belongs to the phosphoglycerate kinase family. In terms of assembly, monomer.

The protein localises to the cytoplasm. The enzyme catalyses (2R)-3-phosphoglycerate + ATP = (2R)-3-phospho-glyceroyl phosphate + ADP. Its pathway is carbohydrate degradation; glycolysis; pyruvate from D-glyceraldehyde 3-phosphate: step 2/5. The polypeptide is Phosphoglycerate kinase (Haloarcula marismortui (strain ATCC 43049 / DSM 3752 / JCM 8966 / VKM B-1809) (Halobacterium marismortui)).